Consider the following 146-residue polypeptide: [Ribosomal protein bS18]-alanine N-acetyltransferase (146 aa).

In terms of domain architecture, N-acetyltransferase spans 2 to 146; sequence SIISQIEACD…ENAVVMACYL (145 aa). 69 to 71 provides a ligand contact to acetyl-CoA; that stretch reads IAI. Glutamate 103 functions as the Proton acceptor in the catalytic mechanism. Asparagine 108 serves as a coordination point for acetyl-CoA. The active-site Proton donor is the tyrosine 114.

This sequence belongs to the acetyltransferase family. RimI subfamily.

It localises to the cytoplasm. It catalyses the reaction N-terminal L-alanyl-[ribosomal protein bS18] + acetyl-CoA = N-terminal N(alpha)-acetyl-L-alanyl-[ribosomal protein bS18] + CoA + H(+). In terms of biological role, acetylates the N-terminal alanine of ribosomal protein bS18. The protein is [Ribosomal protein bS18]-alanine N-acetyltransferase of Haemophilus influenzae (strain ATCC 51907 / DSM 11121 / KW20 / Rd).